A 97-amino-acid chain; its full sequence is DNA-binding protein HU (97 aa).

The protein belongs to the bacterial histone-like protein family. As to quaternary structure, has been isolated in complexes with 5S rRNA and bL25, and with 5S rRNA, bL25 and uL5. Homodimer.

Functionally, histone-like DNA-binding protein which is capable of wrapping DNA to stabilize it, and thus to prevent its denaturation under extreme environmental conditions. This is DNA-binding protein HU from Thermus thermophilus (strain ATCC 27634 / DSM 579 / HB8).